The sequence spans 628 residues: Biosynthetic arginine decarboxylase (628 aa).

Lysine 99 is modified (N6-(pyridoxal phosphate)lysine). 279-289 lines the substrate pocket; the sequence is VDVGGGLGIDY.

This sequence belongs to the Orn/Lys/Arg decarboxylase class-II family. SpeA subfamily. It depends on Mg(2+) as a cofactor. Pyridoxal 5'-phosphate is required as a cofactor.

The enzyme catalyses L-arginine + H(+) = agmatine + CO2. In terms of biological role, catalyzes the biosynthesis of agmatine from arginine. The polypeptide is Biosynthetic arginine decarboxylase (Xylella fastidiosa (strain 9a5c)).